Here is a 234-residue protein sequence, read N- to C-terminus: Leucyl/phenylalanyl-tRNA--protein transferase (234 aa).

Belongs to the L/F-transferase family.

The protein localises to the cytoplasm. It catalyses the reaction N-terminal L-lysyl-[protein] + L-leucyl-tRNA(Leu) = N-terminal L-leucyl-L-lysyl-[protein] + tRNA(Leu) + H(+). The catalysed reaction is N-terminal L-arginyl-[protein] + L-leucyl-tRNA(Leu) = N-terminal L-leucyl-L-arginyl-[protein] + tRNA(Leu) + H(+). The enzyme catalyses L-phenylalanyl-tRNA(Phe) + an N-terminal L-alpha-aminoacyl-[protein] = an N-terminal L-phenylalanyl-L-alpha-aminoacyl-[protein] + tRNA(Phe). Functionally, functions in the N-end rule pathway of protein degradation where it conjugates Leu, Phe and, less efficiently, Met from aminoacyl-tRNAs to the N-termini of proteins containing an N-terminal arginine or lysine. This chain is Leucyl/phenylalanyl-tRNA--protein transferase, found in Escherichia coli O45:K1 (strain S88 / ExPEC).